A 2752-amino-acid polypeptide reads, in one-letter code: Serine/arginine repetitive matrix protein 2 (2752 aa).

N-acetylmethionine is present on Met-1. Residues 60–92 adopt a coiled-coil conformation; it reads HERKRRVELRCLELEEMMEEQGYEEQQIQEKVA. N6-acetyllysine is present on Lys-101. Glycyl lysine isopeptide (Lys-Gly) (interchain with G-Cter in SUMO2) cross-links involve residues Lys-108 and Lys-130. Residues 141–2131 form a disordered region; that stretch reads ISDSYVDGSS…MSPTPLDRCR (1991 aa). Tyr-145 carries the post-translational modification Phosphotyrosine. Lys-169 is modified (N6-acetyllysine). The segment covering 175–185 has biased composition (low complexity); it reads RESSSSRSPTP. Composition is skewed to basic residues over residues 186-197 and 207-249; these read KQKKKKKKKDRG and RERK…KRSR. The sufficient for RNA-binding stretch occupies residues 197 to 259; sequence GRRSESSSPR…STTPAPKSRR (63 aa). Ser-220 and Ser-222 each carry phosphoserine. Positions 263 to 290 are enriched in low complexity; it reads STSADSASSSDTSRSRSRSAAAKTHTTA. Position 286 is a phosphothreonine (Thr-286). 5 positions are modified to phosphoserine: Ser-295, Ser-297, Ser-300, Ser-322, and Ser-323. Residues 313 to 333 are compositionally biased toward polar residues; that stretch reads PGTTSTQRPSSPETATKQPSS. The span at 335–347 shows a compositional bias: basic and acidic residues; it reads YEDKDKDKKEKSA. Low complexity predominate over residues 348-360; the sequence is TRPSPSPERSSTG. 4 positions are modified to phosphoserine: Ser-351, Ser-353, Ser-357, and Ser-358. A phosphothreonine mark is found at Thr-359 and Thr-367. Ser-377 is modified (phosphoserine). Residues 380–398 show a composition bias toward polar residues; that stretch reads PLATTPLSQEPVNPPSEAS. Residues Thr-383 and Thr-384 each carry the phosphothreonine modification. Residues Ser-387, Ser-395, Ser-398, Ser-404, and Ser-408 each carry the phosphoserine modification. Over residues 399–410 the composition is skewed to basic and acidic residues; sequence PTRDRSPPKSPE. Low complexity predominate over residues 411–421; that stretch reads KLPQSSSSESS. Residues Ser-424, Ser-435, Ser-436, Ser-437, Ser-440, and Ser-454 each carry the phosphoserine modification. Residues 461–483 show a composition bias toward basic residues; it reads NRSHGRAKRDKSHSHTPSRRMGR. Residues Ser-484, Ser-486, Ser-506, Ser-508, Ser-510, Ser-534, Ser-536, and Ser-543 each carry the phosphoserine modification. The span at 491 to 536 shows a compositional bias: basic residues; that stretch reads KRGRSRSRTPTKRGHSRSRSPQWRRSRSAQRWGRSRSPQRRGRSRS. The span at 537 to 546 shows a compositional bias: low complexity; sequence PQRPGWSRSR. 3 stretches are compositionally biased toward basic residues: residues 547-564, 571-723, and 732-742; these read NTQR…RSHS, GRSR…RRGR, and NKSRTSQRRSR. A phosphoserine mark is found at Ser-702, Ser-704, and Ser-706. Phosphoserine occurs at positions 778, 780, and 783. Residues 790–805 show a composition bias toward low complexity; it reads SQTPPRRSRSGSSQPK. Over residues 806–816 the composition is skewed to basic residues; the sequence is AKSRTPPRRSR. The segment covering 828–841 has biased composition (low complexity); that stretch reads KTPSRQSHSSSSPH. Phosphoserine occurs at positions 846 and 854. Polar residues predominate over residues 849 to 869; the sequence is PPRQGSITSPQANEQSVTPQR. At Thr-856 the chain carries Phosphothreonine. 2 positions are modified to phosphoserine: Ser-857 and Ser-864. Thr-866 bears the Phosphothreonine mark. Phosphoserine occurs at positions 871, 875, 876, 908, 935, 950, 952, 954, 957, 968, 970, 972, 973, and 974. Composition is skewed to low complexity over residues 901 to 917 and 924 to 945; these read SSTP…SPQP and SPRQ…TSRT. Phosphothreonine is present on residues Thr-977 and Thr-983. Residues Ser-992 and Ser-994 each carry the phosphoserine modification. Position 996 is a phosphotyrosine (Tyr-996). Thr-1003 carries the post-translational modification Phosphothreonine. Residues 1008–1017 show a composition bias toward low complexity; that stretch reads SLSGSKSPCP. Phosphoserine is present on residues Ser-1010, Ser-1014, Ser-1024, Ser-1028, Ser-1032, and Ser-1042. A compositionally biased stretch (polar residues) spans 1040–1064; it reads KSSTPPGESYFGVSSLQLKGQSQTS. Thr-1043 carries the phosphothreonine modification. Phosphotyrosine is present on Tyr-1049. A phosphoserine mark is found at Ser-1064, Ser-1069, Ser-1072, Ser-1073, Ser-1083, Ser-1099, Ser-1101, Ser-1102, and Ser-1103. Polar residues predominate over residues 1071–1092; sequence TSSPEVRQSHSESPSLQSKSQT. A compositionally biased stretch (low complexity) spans 1093–1104; it reads SPKGGRSRSSSP. The residue at position 1106 (Thr-1106) is a Phosphothreonine. A phosphoserine mark is found at Ser-1112, Ser-1122, Ser-1124, Ser-1129, Ser-1132, Ser-1152, Ser-1179, Ser-1188, and Ser-1198. A compositionally biased stretch (polar residues) spans 1132–1159; that stretch reads SPEQSRFQSDSSSYPTVDSNSLLGQSRL. The span at 1204–1214 shows a compositional bias: basic and acidic residues; that stretch reads DTLRTPPRERS. Position 1208 is a phosphothreonine (Thr-1208). A phosphoserine mark is found at Ser-1214, Ser-1219, Ser-1227, Ser-1254, Ser-1257, Ser-1258, Ser-1266, Ser-1270, and Ser-1271. Residues 1216–1233 show a composition bias toward polar residues; sequence AGSSPETKEQNSALPTSS. Residues 1283 to 1292 show a composition bias toward polar residues; it reads TLDQSQSQAS. A phosphoserine mark is found at Ser-1311, Ser-1318, Ser-1320, Ser-1326, Ser-1329, Ser-1336, Ser-1348, Ser-1368, Ser-1382, Ser-1383, Ser-1384, Ser-1387, Ser-1401, Ser-1403, and Ser-1404. Over residues 1318-1328 the composition is skewed to polar residues; sequence SNSPLRENSFG. A compositionally biased stretch (polar residues) spans 1376 to 1386; that stretch reads TRSSGHSSSEL. Thr-1413 bears the Phosphothreonine mark. Residues Ser-1415, Ser-1421, Ser-1423, and Ser-1424 each carry the phosphoserine modification. A Phosphothreonine modification is found at Thr-1434. Over residues 1441–1452 the composition is skewed to low complexity; it reads SGSSPGLRDGSG. Phosphoserine occurs at positions 1444 and 1451. Thr-1453 carries the phosphothreonine modification. Polar residues predominate over residues 1453–1463; that stretch reads TPSRHSLSGSS. Phosphoserine occurs at positions 1458, 1460, 1462, and 1463. Thr-1472 bears the Phosphothreonine mark. Ser-1482 and Ser-1483 each carry phosphoserine. Thr-1492 is modified (phosphothreonine). Phosphoserine is present on residues Ser-1497, Ser-1499, Ser-1501, and Ser-1502. Thr-1511 is subject to Phosphothreonine. Ser-1517, Ser-1519, Ser-1521, and Ser-1522 each carry phosphoserine. Thr-1531 is subject to Phosphothreonine. The span at 1534–1544 shows a compositional bias: polar residues; the sequence is GQRSRSGSSQE. Phosphoserine is present on residues Ser-1537, Ser-1539, Ser-1541, Ser-1542, and Ser-1552. Residues 1555–1567 show a composition bias toward basic and acidic residues; the sequence is ERSESDSSPDSKA. A compositionally biased stretch (basic residues) spans 1568-1577; the sequence is KTRTPLRQRS. Residues Ser-1577, Ser-1579, Ser-1581, Ser-1582, Ser-1598, Ser-1600, Ser-1601, Ser-1616, Ser-1620, Ser-1621, Ser-1648, Ser-1658, Ser-1691, Ser-1693, and Ser-1694 each carry the phosphoserine modification. Positions 1638-1657 are enriched in low complexity; the sequence is SGSSSKGRGPSPEGSSSTES. Positions 1681–1691 are enriched in basic residues; the sequence is KSRTPPRRRSS. Thr-1698 is modified (phosphothreonine). 6 positions are modified to phosphoserine: Ser-1727, Ser-1729, Ser-1731, Ser-1732, Ser-1762, and Ser-1764. Composition is skewed to basic residues over residues 1769 to 1789 and 1798 to 1816; these read GLQR…RRRD and SRRR…RRRG. Ser-1818, Ser-1822, Ser-1854, Ser-1857, Ser-1876, and Ser-1878 each carry phosphoserine. Residues 1834 to 1854 show a composition bias toward basic residues; sequence SSRRRRGRSRTPPTSRKRSRS. Positions 1862 to 2068 are enriched in basic residues; sequence KRSRSRASPA…PRTARGKRSL (207 aa). Position 1880 is a phosphothreonine (Thr-1880). Phosphoserine occurs at positions 1884 and 1890. Thr-1892 is subject to Phosphothreonine. Phosphoserine occurs at positions 1893, 1916, 1919, 1923, and 1925. Phosphothreonine is present on residues Thr-1927 and Thr-1931. Residues Ser-1946 and Ser-1948 each carry the phosphoserine modification. Thr-1950 and Thr-1954 each carry phosphothreonine. A phosphoserine mark is found at Ser-1958 and Ser-1960. 2 positions are modified to phosphothreonine: Thr-1962 and Thr-1966. Phosphoserine occurs at positions 1970, 1972, and 1975. Thr-1978 is modified (phosphothreonine). A phosphoserine mark is found at Ser-1984, Ser-1987, Ser-1996, Ser-1999, Ser-2008, Ser-2011, Ser-2018, and Ser-2020. Position 2022 is a phosphothreonine (Thr-2022). 2 positions are modified to phosphoserine: Ser-2030 and Ser-2032. Thr-2034 carries the post-translational modification Phosphothreonine. 4 positions are modified to phosphoserine: Ser-2042, Ser-2044, Ser-2046, and Ser-2067. At Thr-2069 the chain carries Phosphothreonine. Over residues 2070–2095 the composition is skewed to low complexity; sequence RSPPAIRRRSASGSSSDRSRSATPPA. A phosphoserine mark is found at Ser-2071 and Ser-2090. Thr-2092 carries the post-translational modification Phosphothreonine. Residues 2097–2124 show a composition bias toward polar residues; it reads RNHSGSRTPPVALNSSRMSCFSRPSMSP. Phosphoserine occurs at positions 2100 and 2102. Thr-2104 bears the Phosphothreonine mark. Phosphoserine is present on residues Ser-2118, Ser-2121, Ser-2123, and Ser-2132. Phosphothreonine is present on Thr-2144. Omega-N-methylarginine is present on residues Arg-2194, Arg-2207, Arg-2231, and Arg-2246. Ser-2272 carries the post-translational modification Phosphoserine. An omega-N-methylarginine mark is found at Arg-2274 and Arg-2288. Residues Thr-2289, Thr-2291, and Thr-2302 each carry the phosphothreonine modification. Ser-2310 is modified (phosphoserine). A disordered region spans residues 2311-2342; it reads LTGSGTPPTAANYPSSSRTPQAPASANLVGPR. Residues Thr-2316 and Thr-2329 each carry the phosphothreonine modification. Residues 2317-2334 show a composition bias toward polar residues; sequence PPTAANYPSSSRTPQAPA. Ser-2335 carries the phosphoserine modification. Arg-2342 carries the post-translational modification Omega-N-methylarginine. Ser-2343, Ser-2368, and Ser-2376 each carry phosphoserine. Thr-2381 is modified (phosphothreonine). At Ser-2382 the chain carries Phosphoserine. An Asymmetric dimethylarginine; alternate modification is found at Arg-2384. Arg-2384 bears the Omega-N-methylarginine; alternate mark. Residues 2389–2752 are disordered; it reads AYERVSGRTS…PMRHRSSRSP (364 aa). A phosphoserine mark is found at Ser-2394, Ser-2398, and Ser-2407. Phosphothreonine is present on Thr-2409. Phosphoserine occurs at positions 2412, 2415, 2426, 2429, 2449, and 2453. Residues 2426 to 2439 show a composition bias toward polar residues; sequence SPSSRMGQAPSQSL. A compositionally biased stretch (polar residues) spans 2455–2473; the sequence is FSDQSRCLIAQTTPVAGSQ. 3 stretches are compositionally biased toward low complexity: residues 2474-2487, 2515-2526, and 2533-2567; these read SLSS…TSSA, AQQPSALAALQP, and SSSS…EGSS. Position 2581 is a phosphoserine (Ser-2581). A Phosphothreonine modification is found at Thr-2583. Lys-2587 is covalently cross-linked (Glycyl lysine isopeptide (Lys-Gly) (interchain with G-Cter in SUMO2)). At Thr-2599 the chain carries Phosphothreonine. Positions 2608-2648 are enriched in low complexity; it reads SSSSSSSSSSSSSSSSSSSSSSSSSSSSSSSSSSSSSSSSS. The span at 2651 to 2668 shows a compositional bias: pro residues; sequence PAKPGPQALPKPASPKKP. Phosphoserine occurs at positions 2664, 2675, 2677, 2684, 2688, 2690, 2692, 2694, 2702, and 2706. A compositionally biased stretch (basic and acidic residues) spans 2669-2689; the sequence is PPGERRSRSPRKPIDSLRDSR. The span at 2707-2716 shows a compositional bias: low complexity; the sequence is PRDQQSSSSE. Basic and acidic residues predominate over residues 2717 to 2729; the sequence is RGSRRGQRGDSRS. At Thr-2738 the chain carries Phosphothreonine. At Ser-2740 the chain carries Phosphoserine. Over residues 2743–2752 the composition is skewed to basic residues; the sequence is PMRHRSSRSP.

This sequence belongs to the CWC21 family. As to quaternary structure, component of pre-catalytic, catalytic and post-catalytic spliceosome complexes. Found in a pre-mRNA splicing complex with SFRS4, SFRS5, SNRP70, SNRPA1, SRRM1 and SRRM2. Component of the minor spliceosome, which splices U12-type introns. Interacts with DHX8. Interacts with CACTIN. As to expression, expressed in liver, placenta, and white blood cells.

The protein resides in the nucleus. It is found in the nucleus speckle. Functionally, required for pre-mRNA splicing as component of the spliceosome. As a component of the minor spliceosome, involved in the splicing of U12-type introns in pre-mRNAs. This chain is Serine/arginine repetitive matrix protein 2 (SRRM2), found in Homo sapiens (Human).